The following is a 57-amino-acid chain: Small ribosomal subunit protein eS27 (57 aa).

4 residues coordinate Zn(2+): Cys-10, Cys-13, Cys-29, and Cys-32. The segment at 10-32 (CGDCENEQVVFGKASSVVSCAVC) adopts a C4-type zinc-finger fold.

The protein belongs to the eukaryotic ribosomal protein eS27 family. Part of the 30S ribosomal subunit. Zn(2+) serves as cofactor.

The sequence is that of Small ribosomal subunit protein eS27 from Halorubrum lacusprofundi (strain ATCC 49239 / DSM 5036 / JCM 8891 / ACAM 34).